The following is a 439-amino-acid chain: Xylose isomerase (439 aa).

Catalysis depends on residues His-101 and Asp-104. Residues Glu-232, Glu-268, His-271, Asp-296, Asp-307, Asp-309, and Asp-339 each coordinate Mg(2+).

Belongs to the xylose isomerase family. As to quaternary structure, homotetramer. It depends on Mg(2+) as a cofactor.

The protein resides in the cytoplasm. It catalyses the reaction alpha-D-xylose = alpha-D-xylulofuranose. This Photobacterium profundum (strain SS9) protein is Xylose isomerase.